The chain runs to 647 residues: MIKITFPDGAVREFESGVTTFDIAESISKSLAKKALAGKFNDQLIDTTRAIEEDGSIEIVTPDHKDAYEVLRHSAAHLFAQAAKRLFPNLHLGVGPAIAEGFYYDTDNAEGQISNEDLPCIEAEMQKIVTENYPCIREEVTKEEALELFKDDPYKVELINEHAGAGLTVYRQGEFVDLCRGPHVPSTGRIQVFHLLNVAGAYWRGNSDNNMMQRIYGTAWFDKKDLKAYLTRLEEAKERDHRKLGKELDLFMISQEVGQGLPFWLPDGATIRRTLERYITDKELASGYQHVYTPPLASVELYKTSGHWDHYQEDMFPVMDMGDGEEFVLRPMNCPHHIQVYKNHVRSYRELPIRIAELGMMHRYEKSGALSGLQRVREMTLNDGHIFVTPEQIQEEFQRALQLIIDVYADFNLTDYRFRLSYRDPNDTHKYYDNDEMWENAQSMLKAALDEMDVDYFEAEGEAAFYGPKLDIQVKTALGNEETLSTIQLDFLLPERFDLKYIGADGEEHRPVMIHRGVISTMERFTAILIETYKGAFPTWLAPHQVTVIPISNEAHIDYAWEVAKTLRDRGVRADVDDRNEKMQYKIRASQTSKIPYQLIVGDKEMEDKSVNVRRYGSKATHTESVEEFVENILADIARKSRPDAQA.

A TGS domain is found at 1-61 (MIKITFPDGA…EEDGSIEIVT (61 aa)). Positions 240–538 (DHRKLGKELD…LIETYKGAFP (299 aa)) are catalytic. C334, H385, and H515 together coordinate Zn(2+).

This sequence belongs to the class-II aminoacyl-tRNA synthetase family. In terms of assembly, homodimer. The cofactor is Zn(2+).

The protein resides in the cytoplasm. It carries out the reaction tRNA(Thr) + L-threonine + ATP = L-threonyl-tRNA(Thr) + AMP + diphosphate + H(+). Functionally, catalyzes the attachment of threonine to tRNA(Thr) in a two-step reaction: L-threonine is first activated by ATP to form Thr-AMP and then transferred to the acceptor end of tRNA(Thr). Also edits incorrectly charged L-seryl-tRNA(Thr). In Streptococcus pyogenes serotype M2 (strain MGAS10270), this protein is Threonine--tRNA ligase.